A 166-amino-acid chain; its full sequence is Mitochondrial fission process protein 1 (166 aa).

The next 2 membrane-spanning stretches (helical) occupy residues serine 34–alanine 54 and alanine 80–isoleucine 100. An N6-succinyllysine modification is found at lysine 123. Residues leucine 129–leucine 149 form a helical membrane-spanning segment.

It belongs to the MTFP1 family.

It localises to the mitochondrion inner membrane. Functionally, involved in the mitochondrial division probably by regulating membrane fission. Loss-of-function induces the release of cytochrome c, which activates the caspase cascade and leads to apoptosis. This Homo sapiens (Human) protein is Mitochondrial fission process protein 1 (MTFP1).